Consider the following 266-residue polypeptide: Gasdermin bGSDM (266 aa).

4 beta stranded membrane passes run 65–81 (FSGQ…GADL), 93–113 (EDKL…FAYE), 162–181 (QFTV…EAAV), and 187–203 (AHAS…SLQT). Positions 248–266 (GEEDFSVQPLQAPSGLLKL) are C-terminal region.

The protein belongs to the bacterial gasdermin family. Monomer. In terms of assembly, forms large, homooligomeric ring-shaped pores when inserted in membranes.

It is found in the cytoplasm. The protein localises to the cell membrane. Its activity is regulated as follows. The full-length protein before cleavage is inactive: intramolecular interactions between the N-terminal domain and the C-terminal region mediate autoinhibition. The pyroptosis-like-inducing activity is carried by the released N-terminal domain (Gasdermin bGSDM, N-terminus). Its function is as follows. Precursor of a pore-forming protein involved in defense against bacteriophages. Cleavage of this precursor by its dedicated protease releases the active moiety (gasdermin bGSDM, N-terminus) which inserts into membranes, forming pores and triggering cell death. Expression of bGSDM and the neighboring protease gene (Ga0307981_100051430) is highly toxic in E.coli. In terms of biological role, pore-forming protein that causes membrane permeabilization via a pyroptosis-like activity. This is the active form which makes ring-like pores with an interior pore diameter of 130-190 Angstroms, when integrated in liposomes. This Unknown prokaryotic organism protein is Gasdermin bGSDM.